The sequence spans 286 residues: Probable alpha-ketoglutarate-dependent hypophosphite dioxygenase (286 aa).

Belongs to the PhyH family.

Required for hypophosphite oxidation. The chain is Probable alpha-ketoglutarate-dependent hypophosphite dioxygenase (htxA) from Stutzerimonas stutzeri (Pseudomonas stutzeri).